A 210-amino-acid chain; its full sequence is Protein LURP-one-related 5 (210 aa).

The protein belongs to the LOR family.

Its function is as follows. Might be related to the phospholipid scramblase and tubby-like superfamily of membrane tethered transcription factors. The protein is Protein LURP-one-related 5 of Arabidopsis thaliana (Mouse-ear cress).